The chain runs to 244 residues: tRNA pseudouridine synthase A (244 aa).

Residue Asp52 is the Nucleophile of the active site. Tyr110 contacts substrate.

This sequence belongs to the tRNA pseudouridine synthase TruA family. As to quaternary structure, homodimer.

The enzyme catalyses uridine(38/39/40) in tRNA = pseudouridine(38/39/40) in tRNA. Its function is as follows. Formation of pseudouridine at positions 38, 39 and 40 in the anticodon stem and loop of transfer RNAs. This Finegoldia magna (strain ATCC 29328 / DSM 20472 / WAL 2508) (Peptostreptococcus magnus) protein is tRNA pseudouridine synthase A.